We begin with the raw amino-acid sequence, 449 residues long: Nucleoprotein (449 aa).

A disordered region spans residues 1–55 (MSFTPGKQSSSRASSGNRSGNGILKWADQSDQSRNVQTRGRRVQSKQTATSQQPS). Low complexity predominate over residues 9 to 22 (SSSRASSGNRSGNG). Composition is skewed to polar residues over residues 29 to 38 (QSDQSRNVQT) and 45 to 55 (SKQTATSQQPS). The segment at 52 to 194 (QQPSGGTVVP…GYYIEGSGRS (143 aa)) is RNA-binding. A CoV N NTD domain is found at 61-190 (PYYSWFSGIT…VLPQGYYIEG (130 aa)). The RNA site is built by R106, R122, and R164. Disordered stretches follow at residues 158-231 (PADI…VTPD), 266-297 (ILNK…NFGG), and 387-449 (MMNI…TSEI). S167 carries the phosphoserine; by host modification. A Phosphothreonine; by host modification is found at T174. Phosphoserine; by host is present on S191. Polar residues-rich tracts occupy residues 194-204 (SAPNSRSTSRA) and 212-227 (GSRS…STPG). The CoV N CTD domain maps to 259 to 384 (AKEVRQKILN…QNLNAYQHQE (126 aa)). Positions 266–276 (ILNKPRQKRSP) are enriched in basic residues. Residues 266-385 (ILNKPRQKRS…NLNAYQHQED (120 aa)) form a dimerization region. Residue S391 is modified to Phosphoserine; by host. Positions 400–410 (QKNGQVENDNV) are enriched in polar residues. A compositionally biased stretch (basic and acidic residues) spans 423–440 (KSRELTAEDISLLKKMDE). The residue at position 424 (S424) is a Phosphoserine; by host. T428 carries the phosphothreonine; by host modification.

It belongs to the betacoronavirus nucleocapsid protein family. Homooligomer. Both monomeric and oligomeric forms interact with RNA. Interacts with protein M. Interacts with NSP3; this interaction serves to tether the genome to the newly translated replicase-transcriptase complex at a very early stage of infection. Post-translationally, ADP-ribosylated. The ADP-ribosylation is retained in the virion during infection. In terms of processing, phosphorylated on serine and threonine residues.

Its subcellular location is the virion. It is found in the host endoplasmic reticulum-Golgi intermediate compartment. It localises to the host Golgi apparatus. Functionally, packages the positive strand viral genome RNA into a helical ribonucleocapsid (RNP) and plays a fundamental role during virion assembly through its interactions with the viral genome and membrane protein M. Plays an important role in enhancing the efficiency of subgenomic viral RNA transcription as well as viral replication. This is Nucleoprotein from Sus scrofa (Pig).